Reading from the N-terminus, the 168-residue chain is Cytochrome c oxidase subunit 2 (168 aa).

The Cytoplasmic portion of the chain corresponds to 1–3; that stretch reads MVD. The helical transmembrane segment at 4-38 threads the bilayer; that stretch reads EHKAHKAILAYEKGWLAFSLAMLFVFIALIAYTLA. Residues 39-168 are Periplasmic-facing; the sequence is THTAGVIPAG…NMFGTIVVKE (130 aa). Cu cation is bound by residues His114, Cys149, Cys153, and His157.

This sequence belongs to the cytochrome c oxidase subunit 2 family.

The protein resides in the cell membrane. The enzyme catalyses 4 Fe(II)-[cytochrome c] + O2 + 8 H(+)(in) = 4 Fe(III)-[cytochrome c] + 2 H2O + 4 H(+)(out). Subunits I and II form the functional core of the enzyme complex. Electrons originating in cytochrome c are transferred via heme a and Cu(A) to the binuclear center formed by heme a3 and Cu(B). The polypeptide is Cytochrome c oxidase subunit 2 (cbaB) (Thermus thermophilus (strain ATCC 27634 / DSM 579 / HB8)).